The following is a 205-amino-acid chain: MSKFVVGLTGGIGSGKTTVANLFAEEGICLVDADVVAREVVAPGTHGLNAIISHFGTEMLTASGELDRAKLRQRVFNDEQERQWLNQLLHPMIRQEMLLQVEKATSDYVIMVVPLLFENGLDRLVHRTLVVDISPELQISRTVQRDNVDATQVNNIINSQCSRSEKLARADDIIDNHGEISRLKREVHALHQRYLQLSGNHNAHD.

The 197-residue stretch at 5–201 (VVGLTGGIGS…QRYLQLSGNH (197 aa)) folds into the DPCK domain. Residue 13–18 (GSGKTT) coordinates ATP.

It belongs to the CoaE family.

The protein localises to the cytoplasm. It catalyses the reaction 3'-dephospho-CoA + ATP = ADP + CoA + H(+). The protein operates within cofactor biosynthesis; coenzyme A biosynthesis; CoA from (R)-pantothenate: step 5/5. Catalyzes the phosphorylation of the 3'-hydroxyl group of dephosphocoenzyme A to form coenzyme A. The polypeptide is Dephospho-CoA kinase (Shewanella oneidensis (strain ATCC 700550 / JCM 31522 / CIP 106686 / LMG 19005 / NCIMB 14063 / MR-1)).